A 489-amino-acid polypeptide reads, in one-letter code: Rhamnulokinase (489 aa).

Position 13–17 (A13–R17) interacts with ATP. A disulfide bridge links C68 with C222. Substrate is bound by residues G83 and H236–T238. D237 serves as the catalytic Proton acceptor. T259 lines the ATP pocket. Residue N296 participates in substrate binding. Q304 lines the ATP pocket. A disulfide bridge links C353 with C370. G402 is a binding site for ATP. C413 and C417 form a disulfide bridge.

The protein belongs to the rhamnulokinase family. In terms of assembly, monomer. Mg(2+) is required as a cofactor.

The catalysed reaction is L-rhamnulose + ATP = L-rhamnulose 1-phosphate + ADP + H(+). The protein operates within carbohydrate degradation; L-rhamnose degradation; glycerone phosphate from L-rhamnose: step 2/3. Its function is as follows. Involved in the catabolism of L-rhamnose (6-deoxy-L-mannose). Catalyzes the transfer of the gamma-phosphate group from ATP to the 1-hydroxyl group of L-rhamnulose to yield L-rhamnulose 1-phosphate. The sequence is that of Rhamnulokinase from Escherichia coli (strain SE11).